The following is a 306-amino-acid chain: UDP-3-O-acyl-N-acetylglucosamine deacetylase (306 aa).

Zn(2+) is bound by residues H79, H239, and D243. The active-site Proton donor is the H266.

This sequence belongs to the LpxC family. Requires Zn(2+) as cofactor.

It carries out the reaction a UDP-3-O-[(3R)-3-hydroxyacyl]-N-acetyl-alpha-D-glucosamine + H2O = a UDP-3-O-[(3R)-3-hydroxyacyl]-alpha-D-glucosamine + acetate. The protein operates within glycolipid biosynthesis; lipid IV(A) biosynthesis; lipid IV(A) from (3R)-3-hydroxytetradecanoyl-[acyl-carrier-protein] and UDP-N-acetyl-alpha-D-glucosamine: step 2/6. Its function is as follows. Catalyzes the hydrolysis of UDP-3-O-myristoyl-N-acetylglucosamine to form UDP-3-O-myristoylglucosamine and acetate, the committed step in lipid A biosynthesis. This is UDP-3-O-acyl-N-acetylglucosamine deacetylase from Actinobacillus pleuropneumoniae serotype 7 (strain AP76).